A 285-amino-acid chain; its full sequence is MKFTKMHGCGNDYVYVNLFEEKLDDPARVSIYVSDRHFGIGSDGLITIGPSDKADFRMRIYNADGSEAEMCGNGIRCVAKYVYDHKLTDKTEISVETGAGIKYLTLYVEENKVSQVRVDMGEPILTPGDIPVVKADGSAYSDDYRVIDEPISAGNREWHMTCVSMGNPHAVVFVDDVAGFELEKYGPLFENHKMFPKRTNTEFVEILSRNEAKMRVWERGSAETWACGTGTCATVMACILNKKTDNKVLVHLRGGDLTIEYIPETNHVFMTGPATEVFSGEIDII.

Substrate is bound by residues asparagine 11 and asparagine 62. The active-site Proton donor is the cysteine 71. Residues 72 to 73, asparagine 167, asparagine 200, and 218 to 219 each bind substrate; these read GN and ER. Cysteine 227 functions as the Proton acceptor in the catalytic mechanism. Position 228–229 (228–229) interacts with substrate; it reads GT.

It belongs to the diaminopimelate epimerase family. In terms of assembly, homodimer.

Its subcellular location is the cytoplasm. The catalysed reaction is (2S,6S)-2,6-diaminopimelate = meso-2,6-diaminopimelate. It functions in the pathway amino-acid biosynthesis; L-lysine biosynthesis via DAP pathway; DL-2,6-diaminopimelate from LL-2,6-diaminopimelate: step 1/1. In terms of biological role, catalyzes the stereoinversion of LL-2,6-diaminopimelate (L,L-DAP) to meso-diaminopimelate (meso-DAP), a precursor of L-lysine and an essential component of the bacterial peptidoglycan. In Agathobacter rectalis (strain ATCC 33656 / DSM 3377 / JCM 17463 / KCTC 5835 / VPI 0990) (Eubacterium rectale), this protein is Diaminopimelate epimerase.